We begin with the raw amino-acid sequence, 262 residues long: MANWYRPNYPEVRSRVLGLPEKVRACLFDLDGVLTDTASLHTKAWKAMFDAYLAERAERTGEKFVPFDPAADYHTYVDGKKREDGVRSFLSSRAIEIPDGSPDDPGAAETVYGLGNRKNDMLHKLLRDDGAQVFDGSRRYLEAVTAAGLGVAVVSSSANTRDVLATTGLDRFVQQRVDGVTLREEHIAGKPAPDSFLRAAELLGVTPDAAAVFEDALSGVAAGRAGNFAVVVGINRTGRAAQAAQLRRHGADVVVTDLAELL.

The active-site Nucleophile is the Asp29. Mg(2+) is bound by residues Asp29 and Asp31. Asp29 carries the post-translational modification 4-aspartylphosphate. Catalysis depends on Asp31, which acts as the Proton donor/acceptor. Residues Asp31, Gly79, Arg82, Ser157, and Asn159 each coordinate beta-D-glucose 6-phosphate. Asp215 provides a ligand contact to Mg(2+).

The protein belongs to the HAD-like hydrolase superfamily. CbbY/CbbZ/Gph/YieH family. In terms of assembly, monomer. Mg(2+) is required as a cofactor. Post-translationally, autophosphorylated.

It carries out the reaction beta-D-glucose 1-phosphate = beta-D-glucose 6-phosphate. In terms of biological role, catalyzes the interconversion of D-glucose 1-phosphate (G1P) and D-glucose 6-phosphate (G6P), forming beta-D-glucose 1,6-(bis)phosphate (beta-G16P) as an intermediate. This chain is Beta-phosphoglucomutase, found in Mycobacterium bovis (strain ATCC BAA-935 / AF2122/97).